Here is a 610-residue protein sequence, read N- to C-terminus: Menin (610 aa).

The segment at 214–390 (GVAERSWLYL…SLLEAGEERP (177 aa)) is interaction with FANCD2. Residues 462–552 (AEAAEAEELW…SPPPEGPVLT (91 aa)) form a disordered region. Positions 484-500 (RRESKPEEPPPPKKPAL) are enriched in basic and acidic residues. 2 positions are modified to phosphoserine: S487 and S543. Pro residues predominate over residues 537-548 (APAPAASPPPEG). T594 is subject to Phosphothreonine.

In terms of assembly, component of the MLL-HCF complex, at least composed of KMT2A/MLL1, MEN1, ASH2L, RBBP5, DPY30, WDR5, HCFC1 and HCFC2. Component of the menin-associated histone methyltransferase complex, at least composed of KMT2B/MLL4, MEN1, ASH2L, RBBP5, DPY30 and WDR5. Interacts with POLR2B. Interacts with POLR2A phosphorylated at 'Ser-5', but not with the unphosphorylated, nor 'Ser-2' phosphorylated POLR2A forms. Interacts with FANCD2 and DBF4. Interacts with SMAD3, but not with SMAD2, nor SMAD4. Directly interacts with NFKB1, NFKB2 and RELA. Interacts with JUND (via MBM motif); inhibits the interaction of JUND with MAPK10 and the phosphorylation of JUND by MAP kinases MAPK8 and MAPK10. Interacts with KMT2A (via MBM motif). The KMT2A-MEN1 complex interacts with PSIP1 with a greater affinity as MEN1 enhances interaction of KMT2A with PSIP1.

The protein resides in the nucleus. Functionally, essential component of a MLL/SET1 histone methyltransferase (HMT) complex, a complex that specifically methylates 'Lys-4' of histone H3 (H3K4). Functions as a transcriptional regulator. Binds to the TERT promoter and represses telomerase expression. Plays a role in TGFB1-mediated inhibition of cell-proliferation, possibly regulating SMAD3 transcriptional activity. Represses JUND-mediated transcriptional activation on AP1 sites, as well as that mediated by NFKB subunit RELA. Positively regulates HOXC8 and HOXC6 gene expression. May be involved in normal hematopoiesis through the activation of HOXA9 expression. May be involved in DNA repair. In Canis lupus familiaris (Dog), this protein is Menin (MEN1).